A 248-amino-acid polypeptide reads, in one-letter code: Probable transcriptional regulatory protein Acid345_2125 (248 aa).

It belongs to the TACO1 family.

The protein localises to the cytoplasm. The protein is Probable transcriptional regulatory protein Acid345_2125 of Koribacter versatilis (strain Ellin345).